The primary structure comprises 391 residues: Ethanol acetyltransferase 1 (391 aa).

The transit peptide at 1–24 (MFFTKVLNNQVANGLKQLPVHKRV) directs the protein to the mitochondrion. The AB hydrolase-1 domain occupies 48 to 154 (PIVFVHGIFG…DNSPIEQPHI (107 aa)). Catalysis depends on charge relay system residues Ser-121, Asp-145, and His-295.

The protein belongs to the AB hydrolase superfamily.

Its subcellular location is the mitochondrion. The catalysed reaction is ethanol + acetyl-CoA = ethyl acetate + CoA. The enzyme catalyses acetyl-CoA + H2O = acetate + CoA + H(+). It catalyses the reaction ethyl acetate + H2O = ethanol + acetate + H(+). Its activity is regulated as follows. By ethanol. Thioesterase and esterase reactions are highly repressed in the presence of high ethanol concentrations. In terms of biological role, alcohol acetyltransferase that catalyzes the synthesis of ethyl acetate from ethanol and acetyl-CoA. Can also function as a thioesterase by hydrolyzing acetyl-CoA in the absence of ethanol, as well as esterase hydrolyzing ethyl acetate. This is Ethanol acetyltransferase 1 (EAT1) from Wickerhamomyces anomalus (strain ATCC 58044 / CBS 1984 / NCYC 433 / NRRL Y-366-8) (Yeast).